Consider the following 532-residue polypeptide: Phosphoenolpyruvate carboxylase (532 aa).

It belongs to the PEPCase type 2 family. In terms of assembly, homotetramer. Mg(2+) serves as cofactor.

The enzyme catalyses oxaloacetate + phosphate = phosphoenolpyruvate + hydrogencarbonate. Its function is as follows. Catalyzes the irreversible beta-carboxylation of phosphoenolpyruvate (PEP) to form oxaloacetate (OAA), a four-carbon dicarboxylic acid source for the tricarboxylic acid cycle. This Methanopyrus kandleri (strain AV19 / DSM 6324 / JCM 9639 / NBRC 100938) protein is Phosphoenolpyruvate carboxylase.